A 204-amino-acid polypeptide reads, in one-letter code: Dephospho-CoA kinase (204 aa).

Residues 5 to 204 (VVGLTGGIGS…YLANLVKAML (200 aa)) form the DPCK domain. 13–18 (GSGKSA) is a binding site for ATP.

Belongs to the CoaE family.

It localises to the cytoplasm. The enzyme catalyses 3'-dephospho-CoA + ATP = ADP + CoA + H(+). The protein operates within cofactor biosynthesis; coenzyme A biosynthesis; CoA from (R)-pantothenate: step 5/5. Its function is as follows. Catalyzes the phosphorylation of the 3'-hydroxyl group of dephosphocoenzyme A to form coenzyme A. This Chromobacterium violaceum (strain ATCC 12472 / DSM 30191 / JCM 1249 / CCUG 213 / NBRC 12614 / NCIMB 9131 / NCTC 9757 / MK) protein is Dephospho-CoA kinase.